A 137-amino-acid polypeptide reads, in one-letter code: Small ribosomal subunit protein bS6 (137 aa).

Residues 113–137 form a disordered region; it reads EEQREKKNFRKPFIKREEAATKENK. A compositionally biased stretch (basic and acidic residues) spans 126–137; it reads IKREEAATKENK.

The protein belongs to the bacterial ribosomal protein bS6 family.

In terms of biological role, binds together with bS18 to 16S ribosomal RNA. The polypeptide is Small ribosomal subunit protein bS6 (Mycoplasma capricolum subsp. capricolum (strain California kid / ATCC 27343 / NCTC 10154)).